The chain runs to 114 residues: Large ribosomal subunit protein uL18 (114 aa).

Belongs to the universal ribosomal protein uL18 family. Part of the 50S ribosomal subunit; part of the 5S rRNA/L5/L18/L25 subcomplex. Contacts the 5S and 23S rRNAs.

This is one of the proteins that bind and probably mediate the attachment of the 5S RNA into the large ribosomal subunit, where it forms part of the central protuberance. This chain is Large ribosomal subunit protein uL18, found in Bacteroides fragilis (strain ATCC 25285 / DSM 2151 / CCUG 4856 / JCM 11019 / LMG 10263 / NCTC 9343 / Onslow / VPI 2553 / EN-2).